We begin with the raw amino-acid sequence, 231 residues long: Triggering receptor expressed on myeloid cells 1 (231 aa).

The signal sequence occupies residues 1–20 (MRKTRLWGLLWMFFVSELLA). The Extracellular segment spans residues 21–202 (ATKLTEEKYE…TDIIRVPVFN (182 aa)). One can recognise an Ig-like V-type domain in the interval 26–131 (EEKYELKEGQ…LFDRIRLVVT (106 aa)). Residues C41 and C110 are joined by a disulfide bond. Composition is skewed to polar residues over residues 134 to 157 (SSGTPGSSENSTPNVYKTPPTTTK) and 164 to 182 (TSPTTVTQAPPKSTADVST). Residues 134–182 (SSGTPGSSENSTPNVYKTPPTTTKALRPLYTSPTTVTQAPPKSTADVST) form a disordered region. N-linked (GlcNAc...) asparagine glycosylation is found at N188 and N191. A helical transmembrane segment spans residues 203–223 (IAILVAGGFLSKSLVFSVLFA). Topologically, residues 224-231 (VTLRSFVP) are cytoplasmic.

As to quaternary structure, monomer. Homomultimer; when activated. Interacts with TYROBP/DAP12. Interacts with TLR4.

It is found in the cell membrane. Functionally, cell surface receptor that plays important roles in innate and adaptive immunity by amplifying inflammatory responses. Upon activation by various ligands such as PGLYRP1, HMGB1 or HSP70, multimerizes and forms a complex with transmembrane adapter TYROBP/DAP12. In turn, initiates a SYK-mediated cascade of tyrosine phosphorylation, activating multiple downstream mediators such as BTK, MAPK1, MAPK3 or phospholipase C-gamma. This cascade promotes the neutrophil- and macrophage-mediated release of pro-inflammatory cytokines and/or chemokines, as well as their migration and thereby amplifies inflammatory responses that are triggered by bacterial and fungal infections. By also promoting the amplification of inflammatory signals that are initially triggered by Toll-like receptor (TLR) and NOD-like receptor engagement, plays a major role in the pathophysiology of acute and chronic inflammatory diseases of different etiologies including septic shock and atherosclerosis. The chain is Triggering receptor expressed on myeloid cells 1 (TREM1) from Pongo abelii (Sumatran orangutan).